Consider the following 629-residue polypeptide: Microtubule-associated protein 70-3 (629 aa).

Residues 1-54 form a disordered region; the sequence is MEEGGYAFEVNNGRPTASEFGTTARISSPSLTMSSSFREGGGGGGSKGLTRRRS. Positions 13 to 33 are enriched in polar residues; the sequence is GRPTASEFGTTARISSPSLTM. The stretch at 75–375 forms a coiled coil; it reads VKVELNRLEN…ADRAAKSEAQ (301 aa). A required for targeting to microtubules region spans residues 257 to 493; it reads ILDKLHRQKV…FPLNQSSEGT (237 aa). 3 disordered regions span residues 391–421, 458–519, and 578–629; these read LRGP…LGGA, GTSR…DSVP, and AMEK…RSTQ. The segment covering 393-416 has biased composition (polar residues); it reads GPSSSGNRSTPEGRSMSNGPSRRQ. A coiled-coil region spans residues 544-592; it reads LRDKDEAIEMLAKKVETLTKAMEVEAKKMRREVAAMEKEVSAMRVDNKG. Basic and acidic residues predominate over residues 578–596; sequence AMEKEVSAMRVDNKGSDSR. A compositionally biased stretch (polar residues) spans 603–613; that stretch reads NSKGASTTAQL.

Belongs to the MAP70 family.

It localises to the cytoplasm. The protein resides in the cytoskeleton. In terms of biological role, plant-specific protein that interact with microtubules. The polypeptide is Microtubule-associated protein 70-3 (MAP70.3) (Arabidopsis thaliana (Mouse-ear cress)).